The chain runs to 74 residues: Translation initiation factor IF-1 (74 aa).

The 72-residue stretch at 1–72 (MAKETEMEFE…TRGRITYRKI (72 aa)) folds into the S1-like domain.

The protein belongs to the IF-1 family. As to quaternary structure, component of the 30S ribosomal translation pre-initiation complex which assembles on the 30S ribosome in the order IF-2 and IF-3, IF-1 and N-formylmethionyl-tRNA(fMet); mRNA recruitment can occur at any time during PIC assembly.

The protein resides in the cytoplasm. Its function is as follows. One of the essential components for the initiation of protein synthesis. Stabilizes the binding of IF-2 and IF-3 on the 30S subunit to which N-formylmethionyl-tRNA(fMet) subsequently binds. Helps modulate mRNA selection, yielding the 30S pre-initiation complex (PIC). Upon addition of the 50S ribosomal subunit IF-1, IF-2 and IF-3 are released leaving the mature 70S translation initiation complex. The sequence is that of Translation initiation factor IF-1 from Mycoplasma capricolum subsp. capricolum (strain California kid / ATCC 27343 / NCTC 10154).